Consider the following 442-residue polypeptide: MKPTIVLVGRPNVGKSTLFNRLTKTRDALVADQPGLTRDRHYGIGRVGDRDYLVVDTAGFDPVAKDGIMHEMARQAEQAIAEADALLFMVDGRSGLTPHDEQIAARLRRAGRPVYLVVNKSEGMERTMVAAEFHALGLGDPLPVSASHGEGVKQLLDLVLGAFPPDVEPEEDEGRTPRIAIVGRPNVGKSTFVNSLLGEERVIAFDMPGTTRDAIAIPFERDGRHYTLIDTAGLRRRGKVFEAVEKFSVIKTLQAIEQANVVVLVLDASQDISDQDAHIAGFILEAGRALVVAVNKWDDVDDYRRELIKQDLTRKLNFLSFARFHYISALKGAGVAAVMKSVDAAYAAAMVNLSTPRLTRTMQAALAKQAPPRHGVFRPKMRYAHQGGNNPPVVVIHGAALDHVPTSYVRYLERTFMEAFKLQGTPLRIQFRTAHNPFIGKE.

EngA-type G domains are found at residues P3–V167 and P177–M350. Residues G9–S16, D56–F60, N119–E122, G183–S190, D230–L234, and N295–D298 contribute to the GTP site. Residues V351–H435 enclose the KH-like domain.

The protein belongs to the TRAFAC class TrmE-Era-EngA-EngB-Septin-like GTPase superfamily. EngA (Der) GTPase family. In terms of assembly, associates with the 50S ribosomal subunit.

GTPase that plays an essential role in the late steps of ribosome biogenesis. In Aromatoleum aromaticum (strain DSM 19018 / LMG 30748 / EbN1) (Azoarcus sp. (strain EbN1)), this protein is GTPase Der.